A 148-amino-acid chain; its full sequence is UPF0260 protein YE2365 (148 aa).

It belongs to the UPF0260 family.

This is UPF0260 protein YE2365 from Yersinia enterocolitica serotype O:8 / biotype 1B (strain NCTC 13174 / 8081).